A 149-amino-acid polypeptide reads, in one-letter code: MKLFIILATATLLIAATQAKYLRDEGFDLGETQMSSKCTRQVKMMEPELVKCNRYIAMDIMDDKYEEALSRIQGEGCESEEKFLRGCCVAMKEMEDECVCEWMKMMVENQKGRIGETLMRKGIRDLKELPNKCGISEMECHSRGNWYYV.

An N-terminal signal peptide occupies residues 1 to 22; sequence MKLFIILATATLLIAATQAKYL. 4 cysteine pairs are disulfide-bonded: Cys-38–Cys-98, Cys-52–Cys-87, Cys-88–Cys-133, and Cys-100–Cys-140. 4 no IgE-binding regions span residues 41-53, 68-81, 84-95, and 97-105; these read QVKMMEPELVKCN, ALSRIQGEGCESEE, LRGCCVAMKEME, and ECVCEWMKM. The segment at 108 to 117 is igE-binding; it reads ENQKGRIGET. The no IgE-binding stretch occupies residues 121–131; the sequence is KGIRDLKELPN. The igE-binding stretch occupies residues 132–141; sequence KCGISEMECH.

The protein belongs to the 2S seed storage albumins family. Expressed in seeds (at protein level). Expressed in seeds.

Seed storage protein. This is 2S seed storage albumin protein from Fagopyrum tataricum (Tartarian buckwheat).